The following is a 312-amino-acid chain: GTP cyclohydrolase MptA (312 aa).

This sequence belongs to the GTP cyclohydrolase IV family. As to quaternary structure, homodimer. Requires Fe(2+) as cofactor.

The catalysed reaction is GTP + H2O = 7,8-dihydroneopterin 2',3'-cyclic phosphate + formate + diphosphate + H(+). Its pathway is cofactor biosynthesis; 5,6,7,8-tetrahydromethanopterin biosynthesis. Converts GTP to 7,8-dihydro-D-neopterin 2',3'-cyclic phosphate, the first intermediate in the biosynthesis of coenzyme methanopterin. The polypeptide is GTP cyclohydrolase MptA (Methanococcus vannielii (strain ATCC 35089 / DSM 1224 / JCM 13029 / OCM 148 / SB)).